The sequence spans 356 residues: Gluconolactonase (356 aa).

Residues 1–35 (MTTGRMSRRECLSAAVMVPIAAMTATATITGSAQA) constitute a signal peptide (tat-type signal).

As to quaternary structure, homodimer. Post-translationally, predicted to be exported by the Tat system. The position of the signal peptide cleavage has been experimentally proven.

It is found in the periplasm. It catalyses the reaction D-glucono-1,5-lactone + H2O = D-gluconate + H(+). Its pathway is carbohydrate acid metabolism; D-gluconate biosynthesis; D-gluconate from D-glucono-1,5-lactone: step 1/1. Functionally, hydrolyzes the gluconolactone formed by glucose-fructose oxidoreductase, and that formed in aerobic conditions by the glucose dehydrogenase present. This Zymomonas mobilis subsp. mobilis (strain ATCC 31821 / ZM4 / CP4) protein is Gluconolactonase (gnl).